The sequence spans 239 residues: Probable transcriptional regulatory protein Veis_4238 (239 aa).

The tract at residues 1-22 (MAGHSKWANIQHRKGRQDEKRG) is disordered.

Belongs to the TACO1 family.

It localises to the cytoplasm. The sequence is that of Probable transcriptional regulatory protein Veis_4238 from Verminephrobacter eiseniae (strain EF01-2).